Consider the following 164-residue polypeptide: Anterior gradient protein 2-B (164 aa).

Positions M1–A20 are cleaved as a signal peptide. Short sequence motifs (homodimer stabilization; interchain) lie at residues S34 to W43 and E49 to A56.

Belongs to the AGR family. Monomer and homodimer.

It is found in the secreted. Its subcellular location is the endoplasmic reticulum. This chain is Anterior gradient protein 2-B (agr2-b), found in Xenopus laevis (African clawed frog).